A 213-amino-acid polypeptide reads, in one-letter code: Orotate phosphoribosyltransferase (213 aa).

Lys26 lines the 5-phospho-alpha-D-ribose 1-diphosphate pocket. An orotate-binding site is contributed by 34-35 (FF). Residues 72–73 (YK), Arg99, Lys100, Lys103, His105, and 124–132 (DDVITAGTA) each bind 5-phospho-alpha-D-ribose 1-diphosphate. Orotate contacts are provided by Thr128 and Arg156.

This sequence belongs to the purine/pyrimidine phosphoribosyltransferase family. PyrE subfamily. In terms of assembly, homodimer. It depends on Mg(2+) as a cofactor.

The catalysed reaction is orotidine 5'-phosphate + diphosphate = orotate + 5-phospho-alpha-D-ribose 1-diphosphate. Its pathway is pyrimidine metabolism; UMP biosynthesis via de novo pathway; UMP from orotate: step 1/2. In terms of biological role, catalyzes the transfer of a ribosyl phosphate group from 5-phosphoribose 1-diphosphate to orotate, leading to the formation of orotidine monophosphate (OMP). The polypeptide is Orotate phosphoribosyltransferase (Salmonella arizonae (strain ATCC BAA-731 / CDC346-86 / RSK2980)).